The chain runs to 102 residues: MTEHNHDSQLEINNEEELLTLFDEEGNEVLYRKVLEFYHPEFKKEYVILAEEGAQSDEDDMIELVPMINEPDESGDGGKLVPIETDEEWDMIEEVVNTEMEE.

This sequence belongs to the UPF0473 family.

This is UPF0473 protein SAS1551 from Staphylococcus aureus (strain MSSA476).